Here is a 451-residue protein sequence, read N- to C-terminus: Tubulin alpha-1B chain (451 aa).

An MREC motif motif is present at residues Met-1–Cys-4. Residues Gly-10, Gln-11, Ala-12, and Gln-15 each coordinate GTP. Lys-40 is subject to N6,N6,N6-trimethyllysine; alternate. The residue at position 40 (Lys-40) is an N6-acetyllysine; alternate. Ser-48 is modified (phosphoserine). Residues Glu-71, Ala-99, Ser-140, Gly-143, Gly-144, Thr-145, Gly-146, Thr-179, Glu-183, Asn-206, Tyr-224, and Asn-228 each contribute to the GTP site. Glu-71 is a Mg(2+) binding site. Position 232 is a phosphoserine (Ser-232). Leu-252 is a GTP binding site. Residue Glu-254 is part of the active site. Tyr-282 carries the 3'-nitrotyrosine modification. A Glycyl lysine isopeptide (Lys-Gly) (interchain with G-Cter in ubiquitin) cross-link involves residue Lys-326. The residue at position 339 (Arg-339) is an Omega-N-methylarginine. Lys-370 is covalently cross-linked (Glycyl lysine isopeptide (Lys-Gly) (interchain with G-Cter in ubiquitin)). Residue Ser-439 is modified to Phosphoserine. 2 positions are modified to 5-glutamyl polyglutamate: Glu-443 and Glu-445. A 3'-nitrotyrosine modification is found at Tyr-451.

The protein belongs to the tubulin family. In terms of assembly, heterodimer of alpha- and beta-tubulin. A typical microtubule is a hollow water-filled tube with an outer diameter of 25 nm and an inner diameter of 15 nM. Alpha-beta heterodimers associate head-to-tail to form protofilaments running lengthwise along the microtubule wall with the beta-tubulin subunit facing the microtubule plus end conferring a structural polarity. Microtubules usually have 13 protofilaments but different protofilament numbers can be found in some organisms and specialized cells. Interacts with gamma-tubulin; the interaction allows microtubules to nucleate from the gamma-tubulin ring complex (gTuRC). Nascent microtubule interacts (via alpha-tubulin MREC motif) with TTC5/STRAP; this interaction may result in tubulin mRNA-targeted degradation. Component of sperm flagellar doublet microtubules. It depends on Mg(2+) as a cofactor. Some glutamate residues at the C-terminus are polyglycylated, resulting in polyglycine chains on the gamma-carboxyl group. Glycylation is mainly limited to tubulin incorporated into axonemes (cilia and flagella) whereas glutamylation is prevalent in neuronal cells, centrioles, axonemes, and the mitotic spindle. Both modifications can coexist on the same protein on adjacent residues, and lowering polyglycylation levels increases polyglutamylation, and reciprocally. Cilia and flagella glycylation is required for their stability and maintenance. Flagella glycylation controls sperm motility. In terms of processing, some glutamate residues at the C-terminus are polyglutamylated, resulting in polyglutamate chains on the gamma-carboxyl group. Polyglutamylation plays a key role in microtubule severing by spastin (SPAST). SPAST preferentially recognizes and acts on microtubules decorated with short polyglutamate tails: severing activity by SPAST increases as the number of glutamates per tubulin rises from one to eight, but decreases beyond this glutamylation threshold. Glutamylation is also involved in cilia motility. Post-translationally, acetylation of alpha chains at Lys-40 is located inside the microtubule lumen. This modification has been correlated with increased microtubule stability, intracellular transport and ciliary assembly. Methylation of alpha chains at Lys-40 is found in mitotic microtubules and is required for normal mitosis and cytokinesis contributing to genomic stability. In terms of processing, nitration of Tyr-451 is irreversible and interferes with normal dynein intracellular distribution. Post-translationally, undergoes a tyrosination/detyrosination cycle, the cyclic removal and re-addition of a C-terminal tyrosine residue by the enzymes tubulin tyrosine carboxypeptidase (MATCAP1, VASH1 or VASH2) and tubulin tyrosine ligase (TTL), respectively. Tyrosination promotes microtubule interaction with CAP-Gly domain-containing proteins such as CLIP1, CLIP2 and DCTN1. Tyrosination regulates the initiation of dynein-dynactin motility via interaction with DCTN1, which brings the dynein-dynactin complex into contact with microtubules. In neurons, tyrosinated tubulins mediate the initiation of retrograde vesicle transport. In terms of processing, detyrosination is involved in metaphase plate congression by guiding chromosomes during mitosis: detyrosination promotes interaction with CENPE, promoting pole-proximal transport of chromosomes toward the equator. Detyrosination increases microtubules-dependent mechanotransduction in dystrophic cardiac and skeletal muscle. In cardiomyocytes, detyrosinated microtubules are required to resist to contractile compression during contraction: detyrosination promotes association with desmin (DES) at force-generating sarcomeres, leading to buckled microtubules and mechanical resistance to contraction.

The protein resides in the cytoplasm. The protein localises to the cytoskeleton. The enzyme catalyses GTP + H2O = GDP + phosphate + H(+). Functionally, tubulin is the major constituent of microtubules, protein filaments consisting of alpha- and beta-tubulin heterodimers. Microtubules grow by the addition of GTP-tubulin dimers to the microtubule end, where a stabilizing cap forms. Below the cap, tubulin dimers are in GDP-bound state, owing to GTPase activity of alpha-tubulin. This chain is Tubulin alpha-1B chain (TUBA1B), found in Pan troglodytes (Chimpanzee).